Here is a 246-residue protein sequence, read N- to C-terminus: Proteasome subunit alpha (246 aa).

Belongs to the peptidase T1A family. In terms of assembly, the 20S proteasome core is composed of 14 alpha and 14 beta subunits that assemble into four stacked heptameric rings, resulting in a barrel-shaped structure. The two inner rings, each composed of seven catalytic beta subunits, are sandwiched by two outer rings, each composed of seven alpha subunits. The catalytic chamber with the active sites is on the inside of the barrel. Has probably a gated structure, the ends of the cylinder being occluded by the N-termini of the alpha-subunits. Is likely capped at one or both ends by the proteasome regulatory ATPase, PAN.

The protein resides in the cytoplasm. Its activity is regulated as follows. The formation of the proteasomal ATPase PAN-20S proteasome complex, via the docking of the C-termini of PAN into the intersubunit pockets in the alpha-rings, triggers opening of the gate for substrate entry. Interconversion between the open-gate and close-gate conformations leads to a dynamic regulation of the 20S proteasome proteolysis activity. Functionally, component of the proteasome core, a large protease complex with broad specificity involved in protein degradation. This is Proteasome subunit alpha from Archaeoglobus fulgidus (strain ATCC 49558 / DSM 4304 / JCM 9628 / NBRC 100126 / VC-16).